A 330-amino-acid chain; its full sequence is Major ferric iron-binding protein (330 aa).

A signal peptide spans 1–22 (MKTSIRYALLAAALTAATPALA). Fe cation-binding residues include histidine 31, glutamate 79, tyrosine 217, and tyrosine 218.

Belongs to the bacterial solute-binding protein 1 family.

The protein resides in the periplasm. This protein may be a central component in the iron-acquisition system. This is Major ferric iron-binding protein (fbp) from Neisseria gonorrhoeae.